The following is a 1220-amino-acid chain: Plasma membrane calcium-transporting ATPase 1 (1220 aa).

Gly-2 bears the N-acetylglycine mark. Residues 2–105 (GDMANNSVAY…KTFLQLVWEA (104 aa)) lie on the Cytoplasmic side of the membrane. 2 positions are modified to phosphoserine: Ser-8 and Ser-17. A helical transmembrane segment spans residues 106 to 126 (LQDVTLIILEIAAIVSLGLSF). The Extracellular portion of the chain corresponds to 127–154 (YQPPEGDNALCGEVSVGEEEGEGETGWI). Residues 155 to 175 (EGAAILLSVVCVVLVTAFNDW) form a helical membrane-spanning segment. At 176-366 (SKEKQFRGLQ…KEKSVLQGKL (191 aa)) the chain is on the cytoplasmic side. The tract at residues 297 to 356 (EEEKKDEKKKEKKNKKQDGAIENRNKAKAQDGAAMEMQPLKSEEGGDGDEKDKKKANLPK) is disordered. Basic and acidic residues-rich tracts occupy residues 312–325 (KQDGAIENRNKAKA) and 337–356 (KSEEGGDGDEKDKKKANLPK). Ser-338 is subject to Phosphoserine. Residues 367 to 386 (TKLAVQIGKAGLLMSAITVI) traverse the membrane as a helical segment. Residues 387-418 (ILVLYFVIDTFWVQKRPWLAECTPIYIQYFVK) are Extracellular-facing. Residues 419 to 439 (FFIIGVTVLVVAVPEGLPLAV) form a helical membrane-spanning segment. Topologically, residues 440–855 (TISLAYSVKK…RNVYDSISKF (416 aa)) are cytoplasmic. Catalysis depends on Asp-475, which acts as the 4-aspartylphosphate intermediate. Residues Asp-475, Thr-477, and Asp-797 each coordinate Mg(2+). A helical membrane pass occupies residues 856-876 (LQFQLTVNVVAVIVAFTGACI). At 877 to 882 (TQDSPL) the chain is on the extracellular side. The helical transmembrane segment at 883 to 903 (KAVQMLWVNLIMDTLASLALA) threads the bilayer. At 904–927 (TEPPTESLLLRKPYGRNKPLISRT) the chain is on the cytoplasmic side. The chain crosses the membrane as a helical span at residues 928 to 948 (MMKNILGHAFYQLVVVFTLLF). Topologically, residues 949–971 (AGEKFFDIDSGRNAPLHAPPSEH) are extracellular. The helical transmembrane segment at 972 to 991 (YTIVFNTFVLMQLFNEINAR) threads the bilayer. Topologically, residues 992-1005 (KIHGERNVFEGIFN) are cytoplasmic. A helical transmembrane segment spans residues 1006 to 1027 (NAIFCTIVLGTFVVQIIIVQFG). Topologically, residues 1028 to 1039 (GKPFSCSELSIE) are extracellular. A helical transmembrane segment spans residues 1040 to 1060 (QWLWSIFLGMGTLLWGQLIST). Over 1061–1220 (IPTSRLKFLK…SPLHSLETSL (160 aa)) the chain is Cytoplasmic. Residues 1100-1117 (LRRGQILWFRGLNRIQTQ) are calmodulin-binding subdomain A. Residue Thr-1116 is modified to Phosphothreonine; by PKC. The interval 1118–1220 (IRVVNAFRSS…SPLHSLETSL (103 aa)) is required for basolateral membrane targeting. A phosphoserine mark is found at Ser-1140 and Ser-1155. Residues 1162–1220 (IDDTDAEDDAPTKRNSSPPPSPNKNNNAVDSGIHLTIEMNKSATSSSPGSPLHSLETSL) are disordered. Position 1165 is a phosphothreonine (Thr-1165). At Ser-1177 the chain carries Phosphoserine; by PKA. Phosphoserine occurs at positions 1178 and 1182. The span at 1200 to 1220 (MNKSATSSSPGSPLHSLETSL) shows a compositional bias: polar residues.

The protein belongs to the cation transport ATPase (P-type) (TC 3.A.3) family. Type IIB subfamily. As to quaternary structure, monomer. Dimer. Oligomer. Calmodulin binding. Interacts with PDZD11. Interacts with SLC35G1 and STIM1. Interacts with YWHAE; interacts with the monomeric and dimeric forms of the YWHAE but prefer the monomer form; this interaction inhibits calcium-transporting ATPase activity. Interacts with NPTN; this interaction stabilizes ATP2B1 and increases ATPase activity; this interaction controls T cell calcium homeostasis following T cell activation. Interacts with EPB41; regulates small intestinal calcium absorption through regulation of membrane expression of ATP2B1. Isoform B is ubiquitously expressed. Isoforms A and E have only been found in brain cortex. Isoform C is found in brain cortex, skeletal muscle and heart muscle. Isoform D has only been found in fetal skeletal muscle. Isoform K has been found in small intestine and liver. Isoform B is expressed in hair cells of inner ear.

It is found in the cell membrane. The protein resides in the basolateral cell membrane. Its subcellular location is the synapse. It localises to the presynaptic cell membrane. The protein localises to the cytoplasmic vesicle. It is found in the secretory vesicle. The protein resides in the synaptic vesicle membrane. It catalyses the reaction Ca(2+)(in) + ATP + H2O = Ca(2+)(out) + ADP + phosphate + H(+). Its function is as follows. Catalyzes the hydrolysis of ATP coupled with the transport of calcium from the cytoplasm to the extracellular space thereby maintaining intracellular calcium homeostasis. Plays a role in blood pressure regulation through regulation of intracellular calcium concentration and nitric oxide production leading to regulation of vascular smooth muscle cells vasoconstriction. Positively regulates bone mineralization through absorption of calcium from the intestine. Plays dual roles in osteoclast differentiation and survival by regulating RANKL-induced calcium oscillations in preosteoclasts and mediating calcium extrusion in mature osteoclasts. Regulates insulin sensitivity through calcium/calmodulin signaling pathway by regulating AKT1 activation and NOS3 activation in endothelial cells. May play a role in synaptic transmission by modulating calcium and proton dynamics at the synaptic vesicles. This is Plasma membrane calcium-transporting ATPase 1 from Rattus norvegicus (Rat).